A 221-amino-acid chain; its full sequence is Cytidylate kinase (221 aa).

Residue 7 to 15 coordinates ATP; that stretch reads GPSASGKSS.

It belongs to the cytidylate kinase family. Type 1 subfamily.

It is found in the cytoplasm. The catalysed reaction is CMP + ATP = CDP + ADP. The enzyme catalyses dCMP + ATP = dCDP + ADP. The protein is Cytidylate kinase of Borreliella burgdorferi (strain ZS7) (Borrelia burgdorferi).